The following is a 238-amino-acid chain: Cysteine-rich venom protein (238 aa).

A signal peptide spans 1-19 (MIAFIVLLSLAAVLQQSSG). Residues 38–164 (VDKHNALRRS…STKYLYVCQY (127 aa)) enclose the SCP domain. 8 disulfide bridges follow: C75-C153, C92-C165, C148-C162, C184-C191, C187-C196, C200-C233, C209-C227, and C218-C231. Residues 200-233 (CKYEDAFTNCNELAKETKCKTEWIKSKCPATCFC) form the ShKT domain.

Belongs to the CRISP family. As to expression, expressed by the venom gland.

It is found in the secreted. Functionally, blocks olfactory (CNGA2) and retinal (CNGA1) CNG channel currents. Does not affect neither depolarization- nor caffeine-induced contraction of smooth muscle. In Drysdalia coronoides (White-lipped snake), this protein is Cysteine-rich venom protein.